We begin with the raw amino-acid sequence, 101 residues long: Small ribosomal subunit protein bS18c (101 aa).

A compositionally biased stretch (basic residues) spans 1–19 (MDKSKQPFRKSKRSFRRRL). The interval 1–24 (MDKSKQPFRKSKRSFRRRLPPIGS) is disordered.

Belongs to the bacterial ribosomal protein bS18 family. Part of the 30S ribosomal subunit.

Its subcellular location is the plastid. It is found in the chloroplast. This is Small ribosomal subunit protein bS18c from Amborella trichopoda.